A 573-amino-acid chain; its full sequence is Vacuolar protein 8 (573 aa).

The interval 1–36 (MAASAADRMGRQRMSGLSCSAPPRPTVVTNPGNKQD) is disordered. The span at 27 to 36 (VVTNPGNKQD) shows a compositional bias: polar residues. ARM repeat units follow at residues 60–97 (NRGE…FAEI), 98–137 (TEKD…NLAV), 139–178 (NENK…NLAT), 180–219 (EANK…NMTH), 221–260 (DQNR…NIAV), 264–303 (NRKK…NLAS), 305–344 (SDYQ…NISI), 346–386 (PLNE…NLAA), and 430–469 (DELK…NLSS).

This sequence belongs to the beta-catenin family.

Its subcellular location is the vacuole membrane. Functions in both vacuole inheritance and protein targeting from the cytoplasm to vacuole. This is Vacuolar protein 8 (VAC8) from Yarrowia lipolytica (strain CLIB 122 / E 150) (Yeast).